A 691-amino-acid polypeptide reads, in one-letter code: Calcium-binding and coiled-coil domain-containing protein 1 (691 aa).

The p300 KIX-binding stretch occupies residues 1 to 30 (MEESPLSRAPSRGGVNFLNVARTYIPNTKV). Positions 1-190 (MEESPLSRAP…VQELERALAT (190 aa)) are N-terminal AD (CTNNB1 binding site). Residue S4 is modified to Phosphoserine. Positions 45 to 125 (SDWIGIFKVE…FQFREPRPMD (81 aa)) are interaction with GATA1. Coiled coils occupy residues 145–205 (KATV…YKGI), 232–339 (ELED…AELE), and 417–514 (QSVE…ADEK). The segment at 501-691 (RKLEARLEKV…FSTQDPFTFE (191 aa)) is C-terminal AD (CTNNB1 binding site); interaction with CCAR1. The interval 514-606 (KWNEDATTED…SEAEDEKSVL (93 aa)) is disordered. Residues 653 to 679 (WKECPICKERFPAESDKDALEDHMDGH) form a UBZ1-type zinc finger. Zn(2+) is bound by residues C656, C659, H675, and H679.

The protein belongs to the CALCOCO family. As to quaternary structure, part of a calphoglin complex consisting of CALCOCO1, PPA1 and PGM. Interacts with the bHLH-PAS domains of GRIP1, AHR and ARNT. Interacts with CTNNB1 via both its N- and C-terminal regions. Interacts with EP300. Interacts with CCAR1 (via N-terminus) and GATA1.

It localises to the cytoplasm. It is found in the nucleus. Functionally, functions as a coactivator for aryl hydrocarbon and nuclear receptors (NR). Recruited to promoters through its contact with the N-terminal basic helix-loop-helix-Per-Arnt-Sim (PAS) domain of transcription factors or coactivators, such as NCOA2. During ER-activation acts synergistically in combination with other NCOA2-binding proteins, such as EP300, CREBBP and CARM1. Involved in the transcriptional activation of target genes in the Wnt/CTNNB1 pathway. Functions as a secondary coactivator in LEF1-mediated transcriptional activation via its interaction with CTNNB1. Coactivator function for nuclear receptors and LEF1/CTNNB1 involves differential utilization of two different activation regions. In association with CCAR1 enhances GATA1- and MED1-mediated transcriptional activation from the gamma-globin promoter during erythroid differentiation of K562 erythroleukemia cells. Seems to enhance inorganic pyrophosphatase thus activating phosphogluomutase (PMG). Probably functions as a component of the calphoglin complex, which is involved in linking cellular metabolism (phosphate and glucose metabolism) with other core functions including protein synthesis and degradation, calcium signaling and cell growth. This Homo sapiens (Human) protein is Calcium-binding and coiled-coil domain-containing protein 1 (CALCOCO1).